The chain runs to 445 residues: Methionine aminopeptidase 2-2 (445 aa).

Residues 1-92 (MAAQASEDLK…RVPISQLFPN (92 aa)) are disordered. Low complexity predominate over residues 18–33 (AGDSKAAAATAGQAEA). A compositionally biased stretch (acidic residues) spans 34 to 46 (GEAEDDSDDDEVD). Residues 47-58 (GNAAPEGAASGA) show a composition bias toward low complexity. Residues 59–74 (AKKKKKRKPKKKKKGG) are compositionally biased toward basic residues. His198 serves as a coordination point for substrate. Asp218, Asp229, and His298 together coordinate a divalent metal cation. Residue His306 coordinates substrate. Positions 331 and 426 each coordinate a divalent metal cation.

It belongs to the peptidase M24A family. Methionine aminopeptidase eukaryotic type 2 subfamily. Co(2+) serves as cofactor. It depends on Zn(2+) as a cofactor. Requires Mn(2+) as cofactor. The cofactor is Fe(2+).

The protein localises to the cytoplasm. It catalyses the reaction Release of N-terminal amino acids, preferentially methionine, from peptides and arylamides.. Functionally, cotranslationally removes the N-terminal methionine from nascent proteins. The N-terminal methionine is often cleaved when the second residue in the primary sequence is small and uncharged (Met-Ala-, Cys, Gly, Pro, Ser, Thr, or Val). This Aspergillus terreus (strain NIH 2624 / FGSC A1156) protein is Methionine aminopeptidase 2-2.